Consider the following 288-residue polypeptide: Probable aquaporin PIP2-2 (288 aa).

The interval 1–21 (MAKDIEASAPEGGEFSAKDYT) is disordered. Helical transmembrane passes span 42–62 (AVIA…ATVI) and 81–101 (GVGI…LVYC). An NPA 1 motif is present at residues 111-113 (NPA). Helical transmembrane passes span 130 to 150 (VLYI…VKGF), 172 to 192 (GTGL…VFSA), and 204 to 224 (IPVL…LATI). The NPA 2 motif lies at 232–234 (NPA). Residues 254–274 (IFWVGPLIGAAIAAAYHQYVL) traverse the membrane as a helical segment.

It belongs to the MIP/aquaporin (TC 1.A.8) family. PIP (TC 1.A.8.11) subfamily. In terms of tissue distribution, expressed in roots, leaves and anthers.

It is found in the cell membrane. Its function is as follows. Aquaporins facilitate the transport of water and small neutral solutes across cell membranes. The chain is Probable aquaporin PIP2-2 (PIP2-2) from Oryza sativa subsp. japonica (Rice).